The following is a 485-amino-acid chain: MTDIINLINDFGQSNPERVAVRHKDEELTYQQLMDESSKLAHLLQDNHKPLIVYGHMSPYMLVGMIGAIKAGCGYVPIDTSVPSERVNMIINKVQPDIIFNTSDTQLNHSNIQELTIQSIQDSDNPTLFDSQMGLTDVVYTIFTSGSTGEPKGVQIEYASLIEFAEWMVSLNESEGSQEWLNQAPFSFDLSVMAIYPCLTSGGTLNLVDKEMINKPKLLNEMLVNTPINAWVSTPSFMEMCLLLPNLNESSYPSLNHFFFCGEILPHRTAKALLDRYPSAVVYNTYGPTEATVAVTGIKLTPEVIEAYNPLPVGVSRPNTSLFTTDEGELVIKGNSVSLGYLDNKEKTDAVFNFEDGLRIYHTGDKAIEKDGQWFIQGRIDFQIKLNGYRMELEEIETQLRQSEFVRETVVVPVYKNNKVIHLIGAVVPTEEVRDDLEMTRQIKSELKSRLPEYMIPRKFVWMKQLPLTSNGKLDRKQVAEDINA.

ATP is bound at residue 144–145 (TS). D189 contributes to the D-alanine binding site. Residue 284–289 (NTYGPT) coordinates ATP. A D-alanine-binding site is contributed by V293. Residues D365 and K473 each coordinate ATP. Residue K473 coordinates D-alanine.

Belongs to the ATP-dependent AMP-binding enzyme family. DltA subfamily.

The protein localises to the cytoplasm. It carries out the reaction holo-[D-alanyl-carrier protein] + D-alanine + ATP = D-alanyl-[D-alanyl-carrier protein] + AMP + diphosphate. It participates in cell wall biogenesis; lipoteichoic acid biosynthesis. Functionally, catalyzes the first step in the D-alanylation of lipoteichoic acid (LTA), the activation of D-alanine and its transfer onto the D-alanyl carrier protein (Dcp) DltC. In an ATP-dependent two-step reaction, forms a high energy D-alanyl-AMP intermediate, followed by transfer of the D-alanyl residue as a thiol ester to the phosphopantheinyl prosthetic group of the Dcp. D-alanylation of LTA plays an important role in modulating the properties of the cell wall in Gram-positive bacteria, influencing the net charge of the cell wall. In Staphylococcus haemolyticus (strain JCSC1435), this protein is D-alanine--D-alanyl carrier protein ligase.